The primary structure comprises 110 residues: UPF0122 protein BCAH187_A3894 (110 aa).

The protein belongs to the UPF0122 family.

In terms of biological role, might take part in the signal recognition particle (SRP) pathway. This is inferred from the conservation of its genetic proximity to ftsY/ffh. May be a regulatory protein. In Bacillus cereus (strain AH187), this protein is UPF0122 protein BCAH187_A3894.